A 205-amino-acid chain; its full sequence is MIGRLRGIILEKQPPQVLIEANGVGYEVHMPMTCFYELPELNQEAIIFTHFVVREDAQLLFGFNDKQERALFRELIKVNGVGPKLALAILSGMSATQFVSAVEREEIGALIKLPGVGKKTAERLVVEMKDRFKGLSGDLFNPVSDIPLASPASAESRASDPEAEAAAALVALGYKPQEASRMISKIARPEADCETLIRDALRAAL.

The tract at residues Met-1–Asn-64 is domain I. Residues Asp-65–Pro-142 are domain II. The flexible linker stretch occupies residues Val-143–Ser-156. A domain III region spans residues Arg-157 to Leu-205.

The protein belongs to the RuvA family. In terms of assembly, homotetramer. Forms an RuvA(8)-RuvB(12)-Holliday junction (HJ) complex. HJ DNA is sandwiched between 2 RuvA tetramers; dsDNA enters through RuvA and exits via RuvB. An RuvB hexamer assembles on each DNA strand where it exits the tetramer. Each RuvB hexamer is contacted by two RuvA subunits (via domain III) on 2 adjacent RuvB subunits; this complex drives branch migration. In the full resolvosome a probable DNA-RuvA(4)-RuvB(12)-RuvC(2) complex forms which resolves the HJ.

It localises to the cytoplasm. Its function is as follows. The RuvA-RuvB-RuvC complex processes Holliday junction (HJ) DNA during genetic recombination and DNA repair, while the RuvA-RuvB complex plays an important role in the rescue of blocked DNA replication forks via replication fork reversal (RFR). RuvA specifically binds to HJ cruciform DNA, conferring on it an open structure. The RuvB hexamer acts as an ATP-dependent pump, pulling dsDNA into and through the RuvAB complex. HJ branch migration allows RuvC to scan DNA until it finds its consensus sequence, where it cleaves and resolves the cruciform DNA. In Pectobacterium carotovorum subsp. carotovorum (strain PC1), this protein is Holliday junction branch migration complex subunit RuvA.